Consider the following 173-residue polypeptide: Photosystem I assembly protein Ycf3 (173 aa).

TPR repeat units follow at residues 35 to 68 (AYIYYREGFAAQNNGDYSEALENYEESLKLEENA), 72 to 105 (GETLKNMAIIYMSNGDEDKALDTYQKALEQNPKQ), and 120 to 153 (GRALQQNGKQDESDIWFDKAAEVWTKAVRLYPGG).

Belongs to the Ycf3 family.

Its subcellular location is the cellular thylakoid membrane. Its function is as follows. Essential for the assembly of the photosystem I (PSI) complex. May act as a chaperone-like factor to guide the assembly of the PSI subunits. The chain is Photosystem I assembly protein Ycf3 from Prochlorococcus marinus (strain SARG / CCMP1375 / SS120).